We begin with the raw amino-acid sequence, 276 residues long: Phosphatidylglycerol--prolipoprotein diacylglyceryl transferase (276 aa).

3 consecutive transmembrane segments (helical) span residues 17–37 (LAIHWYGLTYLAAFGLFFFLA), 63–83 (ILFLGVMGVVIGGRLGYCLFY), and 95–115 (ILAVWQGGMSFHGGMLGVLAS). A 1,2-diacyl-sn-glycero-3-phospho-(1'-sn-glycerol) is bound at residue Arg-146. A run of 3 helical transmembrane segments spans residues 182 to 202 (SQVYQFLLEGLLLFVLLWLYA), 209 to 229 (GQVSGAFLVGYGVFRFIAEYF), and 235 to 255 (FLGILALGLSMGQWLCVPMIV).

Belongs to the Lgt family.

The protein localises to the cell inner membrane. The catalysed reaction is L-cysteinyl-[prolipoprotein] + a 1,2-diacyl-sn-glycero-3-phospho-(1'-sn-glycerol) = an S-1,2-diacyl-sn-glyceryl-L-cysteinyl-[prolipoprotein] + sn-glycerol 1-phosphate + H(+). It participates in protein modification; lipoprotein biosynthesis (diacylglyceryl transfer). Its function is as follows. Catalyzes the transfer of the diacylglyceryl group from phosphatidylglycerol to the sulfhydryl group of the N-terminal cysteine of a prolipoprotein, the first step in the formation of mature lipoproteins. The polypeptide is Phosphatidylglycerol--prolipoprotein diacylglyceryl transferase (Polaromonas sp. (strain JS666 / ATCC BAA-500)).